A 187-amino-acid polypeptide reads, in one-letter code: Acetyl-CoA decarbonylase/synthase complex subunit epsilon (187 aa).

Residue M1 is modified to Blocked amino end (Met).

The protein belongs to the CdhB family. As to quaternary structure, heterotetramer of two alpha and two epsilon subunits. The ACDS complex is made up of alpha, epsilon, beta, gamma and delta subunits with a probable stoichiometry of (alpha(2)epsilon(2))(4)-beta(8)-(gamma(1)delta(1))(8).

Part of a complex that catalyzes the reversible cleavage of acetyl-CoA, allowing autotrophic growth from CO(2). The alpha-epsilon subcomponent functions as a carbon monoxide dehydrogenase. The precise role of the epsilon subunit is unclear; it may have a stabilizing role within the alpha(2)epsilon(2) component and/or be involved in electron transfer to FAD during a potential FAD-mediated CO oxidation. The chain is Acetyl-CoA decarbonylase/synthase complex subunit epsilon from Methanothrix soehngenii (Methanosaeta concilii).